A 230-amino-acid chain; its full sequence is UPF0173 metal-dependent hydrolase RSKD131_0588 (230 aa).

The protein belongs to the UPF0173 family.

The protein is UPF0173 metal-dependent hydrolase RSKD131_0588 of Cereibacter sphaeroides (strain KD131 / KCTC 12085) (Rhodobacter sphaeroides).